We begin with the raw amino-acid sequence, 485 residues long: WD repeat-containing protein 13 (485 aa).

M1 is modified (N-acetylmethionine). Phosphoserine occurs at positions 70, 74, and 79. R114 bears the Asymmetric dimethylarginine; alternate mark. R114 is modified (omega-N-methylarginine; alternate). 7 WD repeats span residues 162–202, 208–246, 250–290, 295–335, 341–389, 394–438, and 444–482; these read GMYH…LCQL, TVLRVLRGHTRGVSDFAWSLSNDILVSTSLDATMRIWAS, RCIR…VMNI, KVKG…LFDM, TKAK…VVDN, QLKR…FFDV, and AAVNKLQGHSAPVLDVSFNCDESLLASSDASGMVIVWRR.

As to expression, widely expressed.

The protein localises to the nucleus. This chain is WD repeat-containing protein 13 (WDR13), found in Homo sapiens (Human).